A 694-amino-acid chain; its full sequence is Putative ankyrin repeat protein RBE_0921 (694 aa).

ANK repeat units lie at residues 122–151, 155–185, 216–245, 249–275, 279–317, 321–350, 351–382, 384–413, 423–452, and 456–485; these read LGKT…NINV, NGRN…NINS, FNRT…NVEA, TGET…NTEA, LGRT…NPNA, YGFT…KFKK, NRYE…NIND, NGQN…DNGK, QRNT…DINA, and DGET…DINI.

In Rickettsia bellii (strain RML369-C), this protein is Putative ankyrin repeat protein RBE_0921.